Consider the following 447-residue polypeptide: UDP-N-acetylmuramoyl-L-alanyl-D-glutamate--2,6-diaminopimelate ligase (447 aa).

Threonine 21 serves as a coordination point for UDP-N-acetyl-alpha-D-muramoyl-L-alanyl-D-glutamate. An ATP-binding site is contributed by glycine 74 to threonine 80. Residues threonine 117–threonine 118, serine 144, glutamine 150, and arginine 152 contribute to the UDP-N-acetyl-alpha-D-muramoyl-L-alanyl-D-glutamate site. Lysine 184 is modified (N6-carboxylysine). Meso-2,6-diaminopimelate contacts are provided by residues arginine 340, aspartate 364–arginine 367, glycine 415, and glutamate 419. Positions aspartate 364–arginine 367 match the Meso-diaminopimelate recognition motif motif.

The protein belongs to the MurCDEF family. MurE subfamily. Requires Mg(2+) as cofactor. In terms of processing, carboxylation is probably crucial for Mg(2+) binding and, consequently, for the gamma-phosphate positioning of ATP.

It is found in the cytoplasm. It carries out the reaction UDP-N-acetyl-alpha-D-muramoyl-L-alanyl-D-glutamate + meso-2,6-diaminopimelate + ATP = UDP-N-acetyl-alpha-D-muramoyl-L-alanyl-gamma-D-glutamyl-meso-2,6-diaminopimelate + ADP + phosphate + H(+). It participates in cell wall biogenesis; peptidoglycan biosynthesis. Its function is as follows. Catalyzes the addition of meso-diaminopimelic acid to the nucleotide precursor UDP-N-acetylmuramoyl-L-alanyl-D-glutamate (UMAG) in the biosynthesis of bacterial cell-wall peptidoglycan. In Helicobacter pylori (strain J99 / ATCC 700824) (Campylobacter pylori J99), this protein is UDP-N-acetylmuramoyl-L-alanyl-D-glutamate--2,6-diaminopimelate ligase.